The sequence spans 189 residues: Protein GrpE (189 aa).

The span at 1 to 38 shows a compositional bias: basic and acidic residues; that stretch reads MTKSNETERMEESEETHSSDIRSASESDHASGSDHTES. Residues 1–54 form a disordered region; the sequence is MTKSNETERMEESEETHSSDIRSASESDHASGSDHTESADEIPTADAEQGELEQ.

The protein belongs to the GrpE family. Homodimer.

It localises to the cytoplasm. Its function is as follows. Participates actively in the response to hyperosmotic and heat shock by preventing the aggregation of stress-denatured proteins, in association with DnaK and GrpE. It is the nucleotide exchange factor for DnaK and may function as a thermosensor. Unfolded proteins bind initially to DnaJ; upon interaction with the DnaJ-bound protein, DnaK hydrolyzes its bound ATP, resulting in the formation of a stable complex. GrpE releases ADP from DnaK; ATP binding to DnaK triggers the release of the substrate protein, thus completing the reaction cycle. Several rounds of ATP-dependent interactions between DnaJ, DnaK and GrpE are required for fully efficient folding. This Tropheryma whipplei (strain TW08/27) (Whipple's bacillus) protein is Protein GrpE.